The primary structure comprises 76 residues: Gas vesicle protein A1 (76 aa).

Binds to GvpF1 regions lie at residues 1 to 22 (MAQP…KGVV) and 2 to 43 (AQPD…EARV). The interval 9–19 (LAEVLDRVLDK) is alpha helix 1. The tract at residues 23 to 31 (VDVWARVSL) is beta-strand 1. Residues 32 to 34 (VGI) are beta turn. Residues 35–43 (EILTVEARV) are beta-strand 2. Residues 48–67 (VDTFLHYAEEIAKIEQAELT) are alpha helix 2.

It belongs to the gas vesicle GvpA family. Major component of the gas vesicle shell which is 2 nm thick and consists of a single layer of the protein. It forms 4.6 nm-wide ribs nearly perpendicular to the long axis of the vesicle. Modeled as antiparallel homodimers. The ribs form a low-pitch helix rather than a stack of hoops. Interacts with GvpF1 via its N-terminus (residues 1-43) in early growth stages, none of the other GvpG1 to GvpM1 proteins were seen to directly bind GvpA1 in H.volcanii experiments. Might interact with GvpJ1. Might interact with GvpG1, GvpH1, GvpJ1, GvpM1, GvpN1 and GvpO1.

The protein resides in the gas vesicle shell. In terms of biological role, gas vesicles are hollow, gas filled proteinaceous nanostructures found in several microbial planktonic microorganisms. They allow positioning of halobacteria at the optimal depth for growth in the poorly aerated shallow brine pools of their habitat. GvpA forms the protein shell. The critical collapse pressure (CCP) of p-vac gas vesicles is 0.66 MPa; mutating residues in p-gvpA to those found in c-gvpA increases the CCP. These residues partially and independently control the width and strength of gas vesicles. In stationary phase gas vesicles, about 30 times more GvpA1 is found than GvpA2. Its function is as follows. Expression of a 9.5 kb p-vac DNA fragment containing 2 divergently transcribed regions (gvpD-gvpE-gvpF-gvpG-gvpH-gvpI-gvpJ-gvpK-gvpL-gvpM and gvpA-gvpC-gvpN-gvpO) allows H.volcanii to produce gas vesicles. All site-directed mutagenesis is tested in H.volcanii. A minimal gas vesicle can be made in H.volcanii by gvpA1-gvpO1 plus gvpF1-gvpG1-gvpJ1-gvpK1-gvpL1-gvpM1; lack of enough GvpJ1 prevents their formation. A similar region restores gas vesicle production in H.halobium without the p-vac locus, but it still has the c-vac locus. In Halobacterium salinarum (strain ATCC 700922 / JCM 11081 / NRC-1) (Halobacterium halobium), this protein is Gas vesicle protein A1.